Here is a 156-residue protein sequence, read N- to C-terminus: Small ribosomal subunit protein uS7c (156 aa).

This sequence belongs to the universal ribosomal protein uS7 family. Part of the 30S ribosomal subunit.

It is found in the plastid. The protein localises to the chloroplast. Its function is as follows. One of the primary rRNA binding proteins, it binds directly to 16S rRNA where it nucleates assembly of the head domain of the 30S subunit. In Euglena gracilis, this protein is Small ribosomal subunit protein uS7c (rps7).